We begin with the raw amino-acid sequence, 54 residues long: Protein P32 (54 aa).

Residues 4–24 traverse the membrane as a helical segment; it reads FGKTLITIVTAIIGVAIIAVI.

The protein resides in the virion membrane. Functionally, component of the phage injection machinery. Required for DNA injection in the membrane transformation event. Involved in the formation of the membrane tail tube to connect the virus interior with the host cytosol. Essential for viral infectivity. This chain is Protein P32 (XXXII), found in Enterobacteria phage PRD1 (Bacteriophage PRD1).